The chain runs to 201 residues: Xanthine phosphoribosyltransferase (201 aa).

Positions 20 and 27 each coordinate xanthine. 129–133 (ANGQA) is a binding site for 5-phospho-alpha-D-ribose 1-diphosphate. Lys-157 contributes to the xanthine binding site.

It belongs to the purine/pyrimidine phosphoribosyltransferase family. Xpt subfamily. As to quaternary structure, homodimer.

It localises to the cytoplasm. It carries out the reaction XMP + diphosphate = xanthine + 5-phospho-alpha-D-ribose 1-diphosphate. It participates in purine metabolism; XMP biosynthesis via salvage pathway; XMP from xanthine: step 1/1. In terms of biological role, converts the preformed base xanthine, a product of nucleic acid breakdown, to xanthosine 5'-monophosphate (XMP), so it can be reused for RNA or DNA synthesis. This chain is Xanthine phosphoribosyltransferase, found in Shouchella clausii (strain KSM-K16) (Alkalihalobacillus clausii).